We begin with the raw amino-acid sequence, 112 residues long: Class I hydrophobin 17 (112 aa).

The signal sequence occupies residues 1–19 (MYSQSMVLLAAAFASFVAA). Disulfide bonds link C30–C90, C37–C84, C38–C74, and C91–C104. The N-linked (GlcNAc...) asparagine glycan is linked to N108.

The protein belongs to the fungal hydrophobin family. In terms of assembly, self-assembles to form functional amyloid fibrils called rodlets. Self-assembly into fibrillar rodlets occurs spontaneously at hydrophobic:hydrophilic interfaces and the rodlets further associate laterally to form amphipathic monolayers.

It localises to the secreted. It is found in the cell wall. Aerial growth, conidiation, and dispersal of filamentous fungi in the environment rely upon a capability of their secreting small amphipathic proteins called hydrophobins (HPBs) with low sequence identity. Class I can self-assemble into an outermost layer of rodlet bundles on aerial cell surfaces, conferring cellular hydrophobicity that supports fungal growth, development and dispersal; whereas Class II form highly ordered films at water-air interfaces through intermolecular interactions but contribute nothing to the rodlet structure. Hydph17 is a class I hydrophobin involved in mycelial growth. The sequence is that of Class I hydrophobin 17 from Pleurotus ostreatus (strain PC15) (Oyster mushroom).